A 389-amino-acid chain; its full sequence is Sulfate adenylyltransferase (389 aa).

This sequence belongs to the sulfate adenylyltransferase family.

It carries out the reaction sulfate + ATP + H(+) = adenosine 5'-phosphosulfate + diphosphate. The protein operates within sulfur metabolism; hydrogen sulfide biosynthesis; sulfite from sulfate: step 1/3. In Deinococcus deserti (strain DSM 17065 / CIP 109153 / LMG 22923 / VCD115), this protein is Sulfate adenylyltransferase.